A 349-amino-acid chain; its full sequence is MDDLENNIFNSVEEEIIYWKSVAMKYKTCSEEAQQELQEFQEASREYEAELEAQLQQIEGRNRDLFSENNRLRMELDGIKEKYEEQHSENYVQICSLEGDLSQTKAVRDQLQKYIRELEQANDDLERAKRATIMSLEDFEQRLNQAIERNAFLESELDEKENLLESVQRLKDEARDLRQELAVQQKQEKPKSNMGSPETERMDTSVKASVAIPSAPLTPLSQRGCASTLTSPLSFRTSLDDGYSGTPLTPCARISALNIVGDLLRKVGALESKLASCRNFVHEQSPNRPLTSVSARMNKTREGIENRLSMASGSSVEKGLIKRLEFGSLPSNTPVQGMHSPQGVVKMII.

Residues 23 to 189 (AMKYKTCSEE…ELAVQQKQEK (167 aa)) are a coiled coil. The disordered stretch occupies residues 182–201 (AVQQKQEKPKSNMGSPETER).

It belongs to the nudE family. As to quaternary structure, self-associates. Interacts with pafah1b1. Phosphorylated in mitosis.

The protein resides in the cytoplasm. Its subcellular location is the cytoskeleton. It localises to the microtubule organizing center. It is found in the centrosome. The protein localises to the spindle. The protein resides in the chromosome. Its subcellular location is the centromere. It localises to the kinetochore. It is found in the cleavage furrow. The protein localises to the cytoplasmic vesicle membrane. Required for centrosome duplication and formation and function of the mitotic spindle. This is Nuclear distribution protein nudE homolog 1 (nde1) from Xenopus tropicalis (Western clawed frog).